Reading from the N-terminus, the 930-residue chain is Protein ARABIDILLO 1 (930 aa).

A Nuclear localization signal motif is present at residues 3-8 (RRVRRK). Residues 44 to 90 (FVDWISLPYDTVLQLFTCLNYRDRASLASTCKTWRCLGASSCLWTSL) form the F-box domain. ARM repeat units lie at residues 172-212 (RITS…KHCP), 244-285 (TSNI…TSSQ), 379-418 (PEGL…TFVV), 428-467 (CGRA…NLSV), 469-508 (ANIA…NLSV), 510-552 (EEHK…NLAA), 554-594 (DKCS…NLAA), 600-639 (NNNA…NLSF), 641-683 (DKNR…GLSV), 685-724 (EANS…NLAF), 726-766 (PGNA…YMFD), 790-831 (LDGA…QVTE), and 835-875 (IQEA…QFTI).

Belongs to the beta-catenin family. In terms of assembly, interacts with SNL1. Interacts with MYB53, MYB92 and MYB93. As to expression, expressed ubiquitously, with higher levels in root tip, pericycle and vasculature.

The protein resides in the nucleus. Its function is as follows. Promotes lateral root initiation and development, independently of auxin (IAA) and abscisis acid (ABA). This Arabidopsis thaliana (Mouse-ear cress) protein is Protein ARABIDILLO 1 (FBX5).